A 382-amino-acid chain; its full sequence is UDP-4-amino-4-deoxy-L-arabinose--oxoglutarate aminotransferase (382 aa).

Position 183 is an N6-(pyridoxal phosphate)lysine (Lys183).

Belongs to the DegT/DnrJ/EryC1 family. ArnB subfamily. Homodimer. The cofactor is pyridoxal 5'-phosphate.

The catalysed reaction is UDP-4-amino-4-deoxy-beta-L-arabinose + 2-oxoglutarate = UDP-beta-L-threo-pentopyranos-4-ulose + L-glutamate. It participates in nucleotide-sugar biosynthesis; UDP-4-deoxy-4-formamido-beta-L-arabinose biosynthesis; UDP-4-deoxy-4-formamido-beta-L-arabinose from UDP-alpha-D-glucuronate: step 2/3. It functions in the pathway bacterial outer membrane biogenesis; lipopolysaccharide biosynthesis. Catalyzes the conversion of UDP-4-keto-arabinose (UDP-Ara4O) to UDP-4-amino-4-deoxy-L-arabinose (UDP-L-Ara4N). The modified arabinose is attached to lipid A and is required for resistance to polymyxin and cationic antimicrobial peptides. This chain is UDP-4-amino-4-deoxy-L-arabinose--oxoglutarate aminotransferase, found in Pseudomonas fluorescens (strain Pf0-1).